The sequence spans 635 residues: Sodium-dependent multivitamin transporter (635 aa).

The next 3 membrane-spanning stretches (helical) occupy residues 24–44 (FSIM…AIGL), 68–88 (CLPV…ILGV), and 101–121 (FLGC…IPVF). N138 carries N-linked (GlcNAc...) asparagine glycosylation. Transmembrane regions (helical) follow at residues 143–163 (VCGT…VLYA), 176–196 (LWLS…LGGL), 199–219 (VIWT…AVII), 256–276 (FWTL…VNQA), 297–317 (VFPF…VMFA), 336–356 (FVLY…GLFI), 396–416 (IMLS…MAYI), 428–448 (ISIF…GMFF), and 456–476 (AVVG…GSIV). 2 N-linked (GlcNAc...) asparagine glycosylation sites follow: N489 and N498. A helical membrane pass occupies residues 528–548 (LWYSAHNSTTVIVVGLIVSLL).

The protein belongs to the sodium:solute symporter (SSF) (TC 2.A.21) family. In terms of assembly, interacts with PDZD11. Post-translationally, may be glycosylated. In terms of tissue distribution, expressed in microvessels of the brain (at protein level). Expressed in heart, brain, placenta, lung, liver, skeletal muscle, kidney, and pancreas.

The protein resides in the cell membrane. The protein localises to the apical cell membrane. It catalyses the reaction biotin(out) + 2 Na(+)(out) = biotin(in) + 2 Na(+)(in). It carries out the reaction (R)-pantothenate(out) + 2 Na(+)(out) = (R)-pantothenate(in) + 2 Na(+)(in). The catalysed reaction is (R)-lipoate(out) + 2 Na(+)(out) = (R)-lipoate(in) + 2 Na(+)(in). The enzyme catalyses iodide(out) + 2 Na(+)(out) = iodide(in) + 2 Na(+)(in). Sodium-dependent multivitamin transporter that mediates the electrogenic transport of pantothenate, biotin, lipoate and iodide. Functions as a Na(+)-coupled substrate symporter where the stoichiometry of Na(+):substrate is 2:1, creating an electrochemical Na(+) gradient used as driving force for substrate uptake. Required for biotin and pantothenate uptake in the intestine across the brush border membrane. Plays a role in the maintenance of intestinal mucosa integrity, by providing the gut mucosa with biotin. Contributes to the luminal uptake of biotin and pantothenate into the brain across the blood-brain barrier. In Homo sapiens (Human), this protein is Sodium-dependent multivitamin transporter.